A 119-amino-acid polypeptide reads, in one-letter code: Dihydroneopterin aldolase (119 aa).

Residues glutamate 21, tyrosine 53, and 72–73 (IE) each bind substrate. Lysine 99 serves as the catalytic Proton donor/acceptor.

This sequence belongs to the DHNA family.

It carries out the reaction 7,8-dihydroneopterin = 6-hydroxymethyl-7,8-dihydropterin + glycolaldehyde. It participates in cofactor biosynthesis; tetrahydrofolate biosynthesis; 2-amino-4-hydroxy-6-hydroxymethyl-7,8-dihydropteridine diphosphate from 7,8-dihydroneopterin triphosphate: step 3/4. Functionally, catalyzes the conversion of 7,8-dihydroneopterin to 6-hydroxymethyl-7,8-dihydropterin. This Streptococcus pyogenes serotype M1 protein is Dihydroneopterin aldolase (folB).